A 179-amino-acid chain; its full sequence is Inner membrane-spanning protein YciB (179 aa).

6 helical membrane-spanning segments follow: residues 3–23 (FLFD…ADIY), 24–44 (TATA…WFRH), 49–69 (PMQW…LVLH), 76–96 (WKPT…VIGW), 121–141 (AAWA…AYQF), and 149–169 (FKLF…SVWL).

The protein belongs to the YciB family.

It is found in the cell inner membrane. Plays a role in cell envelope biogenesis, maintenance of cell envelope integrity and membrane homeostasis. This chain is Inner membrane-spanning protein YciB, found in Cupriavidus necator (strain ATCC 17699 / DSM 428 / KCTC 22496 / NCIMB 10442 / H16 / Stanier 337) (Ralstonia eutropha).